The primary structure comprises 66 residues: Large ribosomal subunit protein bL31 (66 aa).

4 residues coordinate Zn(2+): C16, C18, C36, and C39.

The protein belongs to the bacterial ribosomal protein bL31 family. Type A subfamily. In terms of assembly, part of the 50S ribosomal subunit during exponential growth. Zn(2+) serves as cofactor.

Binds the 23S rRNA. Functionally, while neither of the L31 paralogs is essential, this protein seems to function as the main L31 protein. Has a lower affinity for 70S ribosomes than the non-zinc-containing paralog L31B (ytiA); is displaced by it to varying extents, even under zinc-replete conditions. The chain is Large ribosomal subunit protein bL31 (rpmE) from Bacillus subtilis (strain 168).